The sequence spans 518 residues: Glutamate--cysteine ligase (518 aa).

This sequence belongs to the glutamate--cysteine ligase type 1 family. Type 1 subfamily.

The catalysed reaction is L-cysteine + L-glutamate + ATP = gamma-L-glutamyl-L-cysteine + ADP + phosphate + H(+). The protein operates within sulfur metabolism; glutathione biosynthesis; glutathione from L-cysteine and L-glutamate: step 1/2. This Salmonella paratyphi C (strain RKS4594) protein is Glutamate--cysteine ligase.